A 629-amino-acid polypeptide reads, in one-letter code: DNA mismatch repair protein MutL (629 aa).

It belongs to the DNA mismatch repair MutL/HexB family.

In terms of biological role, this protein is involved in the repair of mismatches in DNA. It is required for dam-dependent methyl-directed DNA mismatch repair. May act as a 'molecular matchmaker', a protein that promotes the formation of a stable complex between two or more DNA-binding proteins in an ATP-dependent manner without itself being part of a final effector complex. The polypeptide is DNA mismatch repair protein MutL (Haemophilus influenzae (strain PittGG)).